A 1443-amino-acid chain; its full sequence is Sterol 3-beta-glucosyltransferase ATG26 (1443 aa).

Positions 1–13 (MATQADDAAASQA) are enriched in low complexity. Disordered regions lie at residues 1-69 (MATQ…MFMN) and 88-187 (NDRF…LTLT). The span at 18–32 (GDLKEHVHDELDKIQ) shows a compositional bias: basic and acidic residues. The span at 49–58 (DSEDSDDEDN) shows a compositional bias: acidic residues. Over residues 104–117 (QNTRTESIARTSIL) the composition is skewed to polar residues. Positions 125–134 (DKVHRRRKLS) are enriched in basic residues. A compositionally biased stretch (acidic residues) spans 164-173 (EVADEADDEH). Positions 240–284 (LKEIFEFDEYEQVIEEYPCWLLQSVLLQGYMYITSKHICFYAYLP) constitute a GRAM 1 domain. Residues 289-385 (EAVKSGYLSK…WVKSLQRVIF (97 aa)) form the PH domain. Residues 463–657 (EQVITGDDHD…HGDRHHGIPH (195 aa)) form a disordered region. The span at 506-525 (LAPMSPLSPRSPSQLSPRAS) shows a compositional bias: low complexity. Residues 585-614 (SFLQSSIENPSISTLSPSSYDEPSASQILQ) are compositionally biased toward polar residues. The span at 631–642 (SRKRDRSGKRTP) shows a compositional bias: basic residues. The GRAM 2 domain occupies 765–870 (RFRAHFALPE…DCAVTLHQLM (106 aa)). The stretch at 883 to 910 (DQEEQDDEEAAAAMAERDELQEARQDEF) forms a coiled coil. UDP-alpha-D-glucose is bound by residues serine 957, arginine 958, aspartate 960, alanine 1265, histidine 1267, histidine 1280, serine 1283, glycine 1284, threonine 1285, aspartate 1304, and glutamine 1305. The tract at residues 1385–1443 (NAEHGLAEDDDDTEESWTFVGRDEPDPDAVTKKLSDGLAGLGAAGDRPPPLGSQAPTVA) is disordered. Over residues 1405 to 1419 (GRDEPDPDAVTKKLS) the composition is skewed to basic and acidic residues.

It belongs to the glycosyltransferase 28 family.

The protein localises to the cytoplasm. It is found in the preautophagosomal structure membrane. It carries out the reaction a sterol + UDP-alpha-D-glucose = a sterol 3-beta-D-glucoside + UDP + H(+). It catalyses the reaction ergosterol + UDP-alpha-D-glucose = ergosteryl 3-beta-D-glucoside + UDP + H(+). Functionally, sterol glycosyltransferase responsible for the glycosylation of ergosterol to form ergosterol-glucoside. The sequence is that of Sterol 3-beta-glucosyltransferase ATG26 from Gibberella zeae (strain ATCC MYA-4620 / CBS 123657 / FGSC 9075 / NRRL 31084 / PH-1) (Wheat head blight fungus).